The chain runs to 370 residues: Peptide chain release factor 1 (370 aa).

Gln237 is modified (N5-methylglutamine). A compositionally biased stretch (basic and acidic residues) spans 286-296; that stretch reads ERQRSARDATR. The segment at 286–310 is disordered; sequence ERQRSARDATRKSQVGTGDRSEKIR.

It belongs to the prokaryotic/mitochondrial release factor family. Methylated by PrmC. Methylation increases the termination efficiency of RF1.

Its subcellular location is the cytoplasm. In terms of biological role, peptide chain release factor 1 directs the termination of translation in response to the peptide chain termination codons UAG and UAA. The polypeptide is Peptide chain release factor 1 (Anaeromyxobacter dehalogenans (strain 2CP-C)).